Here is a 145-residue protein sequence, read N- to C-terminus: Mannitol-specific phosphotransferase enzyme IIA component (145 aa).

The region spanning 2-145 (ENLTNISIEL…EEITENLAIA (144 aa)) is the PTS EIIA type-2 domain. Residue His62 is the Tele-phosphohistidine intermediate of the active site. His62 carries the phosphohistidine; by HPr modification.

The protein resides in the cytoplasm. Functionally, the phosphoenolpyruvate-dependent sugar phosphotransferase system (sugar PTS), a major carbohydrate active transport system, catalyzes the phosphorylation of incoming sugar substrates concomitantly with their translocation across the cell membrane. The enzyme II CmtAB PTS system is involved in D-mannitol transport. The sequence is that of Mannitol-specific phosphotransferase enzyme IIA component from Enterococcus faecalis (strain ATCC 700802 / V583).